A 182-amino-acid chain; its full sequence is Ribosome-recycling factor (182 aa).

The disordered stretch occupies residues 136-156 (IRKQEKNSDISKDESRDLQDK).

It belongs to the RRF family.

It is found in the cytoplasm. In terms of biological role, responsible for the release of ribosomes from messenger RNA at the termination of protein biosynthesis. May increase the efficiency of translation by recycling ribosomes from one round of translation to another. The chain is Ribosome-recycling factor from Trichodesmium erythraeum (strain IMS101).